A 2224-amino-acid polypeptide reads, in one-letter code: Coagulation factor V (2224 aa).

An N-terminal signal peptide occupies residues 1–28 (MFPGCPRLWVLVVLGTSWVGWGSQGTEA). Plastocyanin-like domains lie at 30-193 (QLRQ…LLIC), 203-329 (TQKT…IKNC), 348-526 (KRWE…LLIC), and 536-684 (IQRA…DVKC). 2 consecutive F5/8 type A domains span residues 30–329 (QLRQ…IKNC) and 348–684 (KRWE…DVKC). 2 N-linked (GlcNAc...) asparagine glycosylation sites follow: asparagine 51 and asparagine 55. The Ca(2+) site is built by aspartate 139 and aspartate 140. Cysteine 167 and cysteine 193 are joined by a disulfide. Residues asparagine 239, asparagine 297, asparagine 382, asparagine 460, and asparagine 468 are each glycosylated (N-linked (GlcNAc...) asparagine). Cysteine 248 and cysteine 329 form a disulfide bridge. A disulfide bridge links cysteine 500 with cysteine 526. A glycan (N-linked (GlcNAc...) asparagine) is linked at asparagine 554. Cysteine 603 and cysteine 684 are oxidised to a cystine. Threonine 640 bears the Phosphothreonine mark. Positions 692–1573 (SYEIFEPPES…PDNIAAWYLR (882 aa)) are b. Tyrosine 693, tyrosine 724, and tyrosine 726 each carry sulfotyrosine. Residues 738–1573 (SFRNSSLNQE…PDNIAAWYLR (836 aa)) constitute a propeptide, activation peptide (connecting region). Residues asparagine 741, asparagine 752, asparagine 760, asparagine 776, and asparagine 782 are each glycosylated (N-linked (GlcNAc...) asparagine). O-linked (GalNAc...) threonine glycosylation occurs at threonine 805. N-linked (GlcNAc...) asparagine glycosylation occurs at asparagine 821. Positions 822–831 (SSTAEHSSPY) are enriched in polar residues. Positions 822-842 (SSTAEHSSPYSEDPIEDPLQP) are disordered. Serine 859 carries the post-translational modification Phosphoserine; by FAM20C. The tract at residues 894–927 (LSQDTGSPSGMRPWEDLPSQDTGSPSRMRPWKDP) is disordered. 2 repeat units span residues 895-911 (SQDTGSPSGMRPWEDLP) and 912-928 (SQDTGSPSRMRPWKDPP). The interval 895–928 (SQDTGSPSGMRPWEDLPSQDTGSPSRMRPWKDPP) is 2 X 17 AA tandem repeats. 2 N-linked (GlcNAc...) asparagine glycosylation sites follow: asparagine 938 and asparagine 977. 2 disordered regions span residues 982–1001 (WGESTPLANKPGKQSGHPKF) and 1029–1048 (TRKKKKEKHTHHAPLSPRTF). The span at 1029-1040 (TRKKKKEKHTHH) shows a compositional bias: basic residues. N-linked (GlcNAc...) asparagine glycans are attached at residues asparagine 1074, asparagine 1083, asparagine 1103, and asparagine 1106. Residues 1097–1157 (LPDHNQNSSN…SSSPELSEML (61 aa)) are disordered. The segment covering 1099–1111 (DHNQNSSNDTGQA) has biased composition (polar residues). Residues 1139–1154 (HSTSDPSHRSSSPELS) show a composition bias toward low complexity. 35 consecutive repeat copies span residues 1185–1193 (VISPDLSQV), 1194–1202 (TLSPELSQT), 1203–1211 (NLSPDLSHT), 1212–1220 (TLSPELIQR), 1221–1229 (NLSPALGQM), 1230–1238 (PISPDLSHT), 1239–1247 (TLSPDLSHT), 1248–1256 (TLSLDLSQT), 1257–1265 (NLSPELSQT), 1266–1274 (NLSPALGQM), 1275–1283 (PLSPDLSHT), 1284–1292 (TLSLDFSQT), 1293–1301 (NLSPELSHM), 1302–1310 (TLSPELSQT), 1311–1319 (NLSPALGQM), 1320–1328 (PISPDLSHT), 1329–1337 (TLSLDFSQT), 1338–1346 (NLSPELSQT), 1347–1355 (NLSPALGQM), 1356–1364 (PLSPDPSHT), 1365–1373 (TLSLDLSQT), 1374–1382 (NLSPELSQT), 1383–1391 (NLSPDLSEM), 1392–1400 (PLFADLSQI), 1401–1409 (PLTPDLDQM), 1410–1418 (TLSPDLGET), 1419–1427 (DLSPNFGQM), 1428–1436 (SLSPDLSQV), 1437–1445 (TLSPDISDT), 1446–1454 (TLLPDLSQI), 1455–1463 (SPPPDLDQI), 1464–1472 (FYPSESSQS), 1473–1481 (LLLQEFNES), 1482–1490 (FPYPDLGQM), and 1493–1501 (PSSPTLNDT). A 35 X 9 AA approximate tandem repeats of [TNP]-L-S-P-D-L-S-Q-T region spans residues 1185-1501 (VISPDLSQVT…SPSSPTLNDT (317 aa)). Positions 1341–1367 (PELSQTNLSPALGQMPLSPDPSHTTLS) are disordered. A glycan (N-linked (GlcNAc...) asparagine) is linked at asparagine 1479. The N-linked (GlcNAc...) asparagine glycan is linked to asparagine 1499. Sulfotyrosine occurs at positions 1522, 1538, and 1543. Asparagine 1559 carries N-linked (GlcNAc...) asparagine glycosylation. Plastocyanin-like domains lie at 1578–1751 (NRRN…LLIC) and 1761–1907 (NMPM…DRDC). The F5/8 type A 3 domain occupies 1578 to 1907 (NRRNYYIAAE…TPFLIMDRDC (330 aa)). Tyrosine 1593 is subject to Sulfotyrosine. A glycan (N-linked (GlcNAc...) asparagine) is linked at asparagine 1703. Cysteines 1725 and 1751 form a disulfide. Residues histidine 1843 and histidine 1845 each coordinate Cu cation. 2 disulfide bridges follow: cysteine 1907–cysteine 2061 and cysteine 2066–cysteine 2221. F5/8 type C domains lie at 1907-2061 (CRMP…LQGC) and 2066-2221 (CSTP…LFGC). 2 N-linked (GlcNAc...) asparagine glycosylation sites follow: asparagine 2010 and asparagine 2209.

Belongs to the multicopper oxidase family. Factor Va, the activated form of factor V, is composed of a heavy chain and a light chain, non-covalently bound. The interaction between the two chains is calcium-dependent. Forms heterodimer with SERPINA5. In terms of processing, thrombin activates factor V proteolytically to the active cofactor, factor Va (formation of a heavy chain at the N-terminus and a light chain at the C-terminus). Post-translationally, sulfation is required for efficient thrombin cleavage and activation and for full procoagulant activity. Activated protein C inactivates factor V and factor Va by proteolytic degradation. In terms of processing, phosphorylated by FAM20C in the extracellular medium. As to expression, plasma.

The protein resides in the secreted. With respect to regulation, inhibited by SERPINA5. In terms of biological role, central regulator of hemostasis. It serves as a critical cofactor for the prothrombinase activity of factor Xa that results in the activation of prothrombin to thrombin. This is Coagulation factor V (F5) from Homo sapiens (Human).